Consider the following 551-residue polypeptide: Arginine--tRNA ligase (551 aa).

The 'HIGH' region signature appears at 125 to 135; the sequence is ANPTGPLHIGH.

It belongs to the class-I aminoacyl-tRNA synthetase family. Monomer.

It is found in the cytoplasm. It catalyses the reaction tRNA(Arg) + L-arginine + ATP = L-arginyl-tRNA(Arg) + AMP + diphosphate. This Nitratidesulfovibrio vulgaris (strain DSM 19637 / Miyazaki F) (Desulfovibrio vulgaris) protein is Arginine--tRNA ligase.